A 473-amino-acid polypeptide reads, in one-letter code: ATP-dependent 6-phosphofructokinase 1 (473 aa).

Serine 71 bears the Phosphoserine mark. ATP contacts are provided by residues glycine 102, 165–166 (RG), and 190–193 (GDGS). Aspartate 191 contributes to the Mg(2+) binding site. Substrate contacts are provided by residues 219–221 (TID), 264–266 (MGR), glutamate 320, and 376–379 (YMIR). Aspartate 221 (proton acceptor) is an active-site residue.

The protein belongs to the phosphofructokinase type A (PFKA) family. PPi-dependent PFK group II subfamily. Atypical ATP-dependent clade 'X' sub-subfamily. In terms of assembly, homotetramer. Mg(2+) is required as a cofactor. As to expression, expressed in roots, leaves, stems and flowers.

The protein resides in the cytoplasm. The enzyme catalyses beta-D-fructose 6-phosphate + ATP = beta-D-fructose 1,6-bisphosphate + ADP + H(+). It participates in carbohydrate degradation; glycolysis; D-glyceraldehyde 3-phosphate and glycerone phosphate from D-glucose: step 3/4. Allosterically activated by AMP. Its function is as follows. Catalyzes the phosphorylation of D-fructose 6-phosphate to fructose 1,6-bisphosphate by ATP, the first committing step of glycolysis. The protein is ATP-dependent 6-phosphofructokinase 1 of Arabidopsis thaliana (Mouse-ear cress).